The chain runs to 865 residues: Ribosome biogenesis protein BOP1 homolog (865 aa).

Disordered stretches follow at residues 1–195 (MVAN…LKLG) and 207–240 (KTRGLGVFPPVPKRKGKAAQDEYAAGDTSDEEDI). 3 stretches are compositionally biased toward acidic residues: residues 30-44 (LDESNDEDNSNESDY), 57-79 (NEGEDSSDSDGEYATDDDEDDVL), and 87-159 (DGEE…EEEA). Basic and acidic residues predominate over residues 160 to 180 (KENGKEKPAKAKAERKQREEQ). WD repeat units follow at residues 526-565 (GHTSLIRCISVEPKGEYIVTGSDDMTVKIWEISTARCIRT), 567-607 (PTGD…YMLV), 651-693 (THFR…SQVP), 696-734 (KSKGLIQCVLFHPIKPCLFVATQRHIRVYDLVKQLMMKK), 737-776 (PGCKWISSMAIHPKGDNLLIGTYEKRLMWFDLDLSTKPYQ), 780-819 (IHNAAIRSVAFHPRYPLFASAGDDRSVIVSHGMVYNDLLQ), and 835-865 (VNDFSVFDVVFHPTQPWVFSSGADNTVRLYT).

This sequence belongs to the WD repeat BOP1/ERB1 family.

The protein localises to the nucleus. It localises to the nucleolus. Its subcellular location is the nucleoplasm. Functionally, required for maturation of ribosomal RNAs and formation of the large ribosomal subunit. This is Ribosome biogenesis protein BOP1 homolog from Anopheles gambiae (African malaria mosquito).